The following is a 499-amino-acid chain: Bifunctional purine biosynthesis protein PurH (499 aa).

Residues 1-144 (MIKRALISVF…KNFKDVVVLT (144 aa)) enclose the MGS-like domain.

The protein belongs to the PurH family.

It catalyses the reaction (6R)-10-formyltetrahydrofolate + 5-amino-1-(5-phospho-beta-D-ribosyl)imidazole-4-carboxamide = 5-formamido-1-(5-phospho-D-ribosyl)imidazole-4-carboxamide + (6S)-5,6,7,8-tetrahydrofolate. It carries out the reaction IMP + H2O = 5-formamido-1-(5-phospho-D-ribosyl)imidazole-4-carboxamide. Its pathway is purine metabolism; IMP biosynthesis via de novo pathway; 5-formamido-1-(5-phospho-D-ribosyl)imidazole-4-carboxamide from 5-amino-1-(5-phospho-D-ribosyl)imidazole-4-carboxamide (10-formyl THF route): step 1/1. The protein operates within purine metabolism; IMP biosynthesis via de novo pathway; IMP from 5-formamido-1-(5-phospho-D-ribosyl)imidazole-4-carboxamide: step 1/1. This Clostridium botulinum (strain Langeland / NCTC 10281 / Type F) protein is Bifunctional purine biosynthesis protein PurH.